Consider the following 215-residue polypeptide: GTP-binding protein YPT6 (215 aa).

Position 17-24 (17-24 (GEQGVGKT)) interacts with GTP. Positions 39–47 (YQATIGIDF) match the Effector region motif. Residues 65-69 (DTAGQ) and 124-127 (NKSD) contribute to the GTP site. Residues 178-196 (NSESTPLDSENANSANQNK) show a composition bias toward polar residues. Residues 178 to 215 (NSESTPLDSENANSANQNKPGVIDISTAEEQEQSACQC) are disordered. Residues C213 and C215 are each lipidated (S-geranylgeranyl cysteine). C215 is modified (cysteine methyl ester).

It belongs to the small GTPase superfamily. Rab family. Interacts with YIF1, YIP3 and YIP4.

Its subcellular location is the cell membrane. Functionally, protein transport. Might participate in post-Golgi transport. In Saccharomyces cerevisiae (strain ATCC 204508 / S288c) (Baker's yeast), this protein is GTP-binding protein YPT6 (YPT6).